A 761-amino-acid polypeptide reads, in one-letter code: Protein spire homolog 1 (761 aa).

2 disordered regions span residues 1–23 and 160–183; these read MTDGGMLISPSALQDPGDGARPE and DCPDEGYEATEEEDEGEEENAEVS. Residues 36–223 form the KIND domain; the sequence is LCLEEILTLY…RALYAETKEL (188 aa). Residues 160-180 are compositionally biased toward acidic residues; it reads DCPDEGYEATEEEDEGEEENA. Positions 218-246 form a coiled coil; the sequence is AETKELRTFLEKIKSAKENLRKMEGETEE. WH2 domains follow at residues 295-313 and 359-376; these read PYEMLMDDIRSKRYKLRKV and LHERILEEIRSERKLRPV. Disordered stretches follow at residues 375-406 and 419-539; these read PVSPDMIRRSRLGAGKSISTPQDLFRSSDIPD and ANGT…KSLA. The span at 469-480 shows a compositional bias: low complexity; sequence SSSSISTSLVED. The span at 504 to 520 shows a compositional bias: basic and acidic residues; that stretch reads PDKRIAPQRRHSIEKEA. The segment at 557 to 577 is spir-box; the sequence is LTLTVEEVMHIRQVLVKAELE. 2 disordered regions span residues 630 to 694 and 728 to 761; these read PSKP…DELE and STKRARLHRRTHSVYSSSTSSSNYKPTERTIKEV. Residues 636–647 are compositionally biased toward low complexity; the sequence is SLPISSLGPSIL. The span at 682-693 shows a compositional bias: basic and acidic residues; the sequence is KHGDRSSSKDEL. A compositionally biased stretch (basic residues) spans 728 to 739; sequence STKRARLHRRTH. Over residues 740–749 the composition is skewed to low complexity; that stretch reads SVYSSSTSSS.

It belongs to the spire family.

The protein resides in the cytoplasm. It is found in the cytoskeleton. It localises to the cytosol. The protein localises to the cleavage furrow. Its subcellular location is the perinuclear region. The protein resides in the cell membrane. It is found in the cytoplasmic vesicle membrane. Functionally, acts as an actin nucleation factor, remains associated with the slow-growing pointed end of the new filament. Involved in intracellular vesicle transport along actin fibers, providing a novel link between actin cytoskeleton dynamics and intracellular transport. Required for asymmetric spindle positioning and asymmetric cell division during meiosis. Required for normal formation of the cleavage furrow and for polar body extrusion during female germ cell meiosis. Also acts in the nucleus: together with FMN2, promotes assembly of nuclear actin filaments in response to DNA damage in order to facilitate movement of chromatin and repair factors after DNA damage. In addition, promotes innate immune signaling downstream of dsRNA sensing. Mechanistically, contributes to IRF3 phosphorylation and activation downstream of MAVS and upstream of TBK1. The sequence is that of Protein spire homolog 1 from Danio rerio (Zebrafish).